The sequence spans 252 residues: tRNA1(Val) (adenine(37)-N6)-methyltransferase (252 aa).

The protein belongs to the methyltransferase superfamily. tRNA (adenine-N(6)-)-methyltransferase family.

The protein localises to the cytoplasm. The catalysed reaction is adenosine(37) in tRNA1(Val) + S-adenosyl-L-methionine = N(6)-methyladenosine(37) in tRNA1(Val) + S-adenosyl-L-homocysteine + H(+). Specifically methylates the adenine in position 37 of tRNA(1)(Val) (anticodon cmo5UAC). The protein is tRNA1(Val) (adenine(37)-N6)-methyltransferase of Yersinia pseudotuberculosis serotype O:3 (strain YPIII).